The sequence spans 144 residues: Large ribosomal subunit protein uL13 (144 aa).

It belongs to the universal ribosomal protein uL13 family. In terms of assembly, part of the 50S ribosomal subunit.

In terms of biological role, this protein is one of the early assembly proteins of the 50S ribosomal subunit, although it is not seen to bind rRNA by itself. It is important during the early stages of 50S assembly. In Legionella pneumophila (strain Paris), this protein is Large ribosomal subunit protein uL13.